A 218-amino-acid chain; its full sequence is Probable 1-Cys peroxiredoxin (218 aa).

The Thioredoxin domain occupies 5 to 166; sequence WALGDLVPDI…VLRVLDSLQL (162 aa). The Cysteine sulfenic acid (-SOH) intermediate role is filled by Cys-47.

The protein belongs to the peroxiredoxin family. Prx6 subfamily.

The protein localises to the nucleus. The protein resides in the cytoplasm. The enzyme catalyses a hydroperoxide + [thioredoxin]-dithiol = an alcohol + [thioredoxin]-disulfide + H2O. Thiol-specific peroxidase that catalyzes the reduction of hydrogen peroxide and organic hydroperoxides to water and alcohols, respectively. Seems to contribute to the inhibition of germination during stress. Associated with the rehydration events involved in the recovery of the desiccation-tolerant moss. The protein is Probable 1-Cys peroxiredoxin of Syntrichia ruralis (Great hairy screw-moss).